The sequence spans 767 residues: MAKRHSHYQGSRRRHARGSNSKKAGRGNAKGIQGRKIKKKPTPTNSWHNSSIPLGEGDLDDVGADFNPGRAFISPKTIEDYYFGRDAKSRSMKMGGLRPGNRYDSSTDLQAGRAAFRKRPMQFVKAKEVYDPSHNMIQKLRAKNETKNSEEIVEREADVFEEPGKMTSDVEYINNEDSENEDDDSQNSPSTDHSLSSNESKVEDGDLFFVDEEAQQSPDLTKIKRVCIEEIARPREVAIEFDPILTIGKVELSVSEGNESKEISVDVPNKGNKTYHPFAGYISNVLHGMHTSDSDNDELDYEIETENNSEPLYESSASSEVDQGFNYVGQRHNSRADNNLLPSPSPQLTEDIKCLSINGTKTFEGNNDNLSSPASEELEFGFKEEDFVINTNDIVVSNIRMGGVDNSYYLRCYRLLGDYDFHWIDQDLLTDFVVDELGLPEDRLPAYLNFIKNSLIPKIEPAEPTYSDIPISDSSDEGDSYEGDSYEDDEDMASSVVHSDIEEGLDDLIAYTLKHDTERFKTFETKSLETKGKGKKKKLLIDDALALDTETLETLQSKFSKRIETKAKKRKAKEDFIDQENRNSNDMLKKYPYGLHIQNIKDEFESFLSRNNDRLTFPPLDPHGNKTVMKIAKHYNMKSSKIGKANHTSVVVEKIKKTKWSSPNYSLIDQLMRQRPVFMRIDIRRPREEQAAFERTKTIRGKFHVKEGEIVGQNAPEIGNENIGRRMLEKLGWKSGEGLGIQGNKGISEPIFAKIKKNRSGLRHSES.

Basic residues predominate over residues 1–17; it reads MAKRHSHYQGSRRRHAR. Positions 1 to 60 are disordered; it reads MAKRHSHYQGSRRRHARGSNSKKAGRGNAKGIQGRKIKKKPTPTNSWHNSSIPLGEGDLD. Polar residues predominate over residues 42-52; it reads TPTNSWHNSSI. Position 105 is a phosphoserine (S105). Positions 176-185 are enriched in acidic residues; it reads EDSENEDDDS. The interval 176-200 is disordered; that stretch reads EDSENEDDDSQNSPSTDHSLSSNES. A phosphoserine mark is found at S217, S255, S334, S343, and S345. The segment at 466–493 is disordered; the sequence is YSDIPISDSSDEGDSYEGDSYEDDEDMA. Residues 474-492 are compositionally biased toward acidic residues; the sequence is SSDEGDSYEGDSYEDDEDM. The 63-residue stretch at 594 to 656 folds into the R3H domain; sequence GLHIQNIKDE…HTSVVVEKIK (63 aa). The 48-residue stretch at 720-767 folds into the G-patch domain; sequence NENIGRRMLEKLGWKSGEGLGIQGNKGISEPIFAKIKKNRSGLRHSES.

The protein belongs to the SQS1 family.

The protein resides in the cytoplasm. It is found in the nucleus. Functionally, may be involved in splicing since overexpression antagonizes the suppression of splicing defects by SPP382 mutants. The polypeptide is Protein SQS1 (SQS1) (Saccharomyces cerevisiae (strain YJM789) (Baker's yeast)).